A 357-amino-acid polypeptide reads, in one-letter code: Chorismate synthase (357 aa).

R48 and R54 together coordinate NADP(+). Residues 125–127, 243–244, G283, 298–302, and R324 each bind FMN; these read RSS, NA, and KPTSS.

The protein belongs to the chorismate synthase family. Homotetramer. FMNH2 serves as cofactor.

The enzyme catalyses 5-O-(1-carboxyvinyl)-3-phosphoshikimate = chorismate + phosphate. It participates in metabolic intermediate biosynthesis; chorismate biosynthesis; chorismate from D-erythrose 4-phosphate and phosphoenolpyruvate: step 7/7. Its function is as follows. Catalyzes the anti-1,4-elimination of the C-3 phosphate and the C-6 proR hydrogen from 5-enolpyruvylshikimate-3-phosphate (EPSP) to yield chorismate, which is the branch point compound that serves as the starting substrate for the three terminal pathways of aromatic amino acid biosynthesis. This reaction introduces a second double bond into the aromatic ring system. This chain is Chorismate synthase, found in Pasteurella multocida (strain Pm70).